We begin with the raw amino-acid sequence, 387 residues long: Protein spaetzle 5 (387 aa).

The N-terminal stretch at 1-29 is a signal peptide; it reads MTKSIKRPPPFSCKQVLLTYVILAYTVAA. A propeptide spanning residues 30-284 is cleaved from the precursor; the sequence is HSSPPPCGLY…PLKKRSRTKR (255 aa). The tract at residues 133 to 197 is disordered; sequence QTPFGGNPQR…SGGHLYINQS (65 aa). Residues N195 and N204 are each glycosylated (N-linked (GlcNAc...) asparagine). 2 disordered regions span residues 219 to 256 and 269 to 291; these read KQRQ…QSKR and GVEA…GRST. The segment covering 237–247 has biased composition (acidic residues); that stretch reads QTEEAEEQDNP. The segment covering 276-286 has biased composition (basic residues); sequence LKKRSRTKRQS. Residues 291 to 384 enclose the Spaetzle domain; that stretch reads TLCQTTSQFI…WFPSCCVCTI (94 aa). 3 cysteine pairs are disulfide-bonded: C293-C350, C331-C380, and C340-C382.

As to quaternary structure, homodimer; disulfide-linked. As to expression, detected in the fan-shaped body which is a component of the locomotion center in the central nervous system (CNS) (at protein level).

Its function is as follows. Neurotrophin which may function as a ligand for the Toll-related receptors Toll-6 and Toll-7. Binds to Toll-7 and Toll-6, and probably acts as their ligands in the promotion of motor axon targeting and neuronal survival in the central nervous system (CNS). Involved in synaptic targeting of ISNb/d motorneurons and also some SNa motorneurons. May be involved in the normal development of specific neurons at the neuromuscular junction. The chain is Protein spaetzle 5 from Drosophila melanogaster (Fruit fly).